A 161-amino-acid chain; its full sequence is uncharacterized protein (161 aa).

Residues 76-94 (ISISSQCIFNVVILSFVFT) form a helical membrane-spanning segment.

Its subcellular location is the membrane. This is an uncharacterized protein from Saccharomyces cerevisiae (strain ATCC 204508 / S288c) (Baker's yeast).